The following is a 148-amino-acid chain: MKILLIKDVKTLGKAGEVKEVKDGYGQNFLIAKGFAKHATAEILAQHKEDERIAAENLAKEIVSLKDLATKLDKAEIVITKKLGQNGHLFGSITKDEVAHALLEQHNVEIDKKHITDKLSIKTAGKHDLDLRLGHGIHATLHVDVVGE.

It belongs to the bacterial ribosomal protein bL9 family.

Its function is as follows. Binds to the 23S rRNA. This is Large ribosomal subunit protein bL9 from Sulfurimonas denitrificans (strain ATCC 33889 / DSM 1251) (Thiomicrospira denitrificans (strain ATCC 33889 / DSM 1251)).